We begin with the raw amino-acid sequence, 381 residues long: Homoserine O-succinyltransferase (381 aa).

Residues 45–360 (NAVLVCHALN…PHGHDAFLLD (316 aa)) enclose the AB hydrolase-1 domain. The active-site Nucleophile is the Ser151. Arg221 is a binding site for substrate. Residues Asp321 and His354 contribute to the active site. Position 355 (Asp355) interacts with substrate.

The protein belongs to the AB hydrolase superfamily. MetX family. Homodimer.

The protein localises to the cytoplasm. It catalyses the reaction L-homoserine + succinyl-CoA = O-succinyl-L-homoserine + CoA. It functions in the pathway amino-acid biosynthesis; L-methionine biosynthesis via de novo pathway; O-succinyl-L-homoserine from L-homoserine: step 1/1. Its function is as follows. Transfers a succinyl group from succinyl-CoA to L-homoserine, forming succinyl-L-homoserine. The protein is Homoserine O-succinyltransferase of Burkholderia pseudomallei (strain 1710b).